The chain runs to 734 residues: Photosystem I P700 chlorophyll a apoprotein A2 (734 aa).

A run of 8 helical transmembrane segments spans residues 46–69 (IFASHFGQLAIIFLWTSGNLFHVA), 135–158 (LYTGALFLLFISAIFLIAGWLHLQ), 175–199 (LNHHLSGLFGVSSLAWTGHLVHVAI), 273–291 (IAHHHLAIAFIFLVAGHMY), 330–353 (LHFQLGLALASLGVITSLVAQHMY), 369–395 (AALYTHHQYIAGFIMTGAFAHGAIFFI), 417–439 (AIISHLSWASLFLGFHTLGLYVH), and 517–535 (FLVHHAIALGLHTTTLILV). Cysteine 559 and cysteine 568 together coordinate [4Fe-4S] cluster. Helical transmembrane passes span 575 to 596 (AFYLAVFWMLNTIGWVTFYWHW) and 643 to 665 (LSVWAWMFLFGHLVWAIGFMFLI). Histidine 654, methionine 662, and tyrosine 670 together coordinate chlorophyll a. Phylloquinone is bound at residue tryptophan 671. Residues 707–727 (LVGLAHFSVGYIFTYAAFLIA) form a helical membrane-spanning segment.

Belongs to the PsaA/PsaB family. In terms of assembly, the PsaA/B heterodimer binds the P700 chlorophyll special pair and subsequent electron acceptors. PSI consists of a core antenna complex that captures photons, and an electron transfer chain that converts photonic excitation into a charge separation. The eukaryotic PSI reaction center is composed of at least 11 subunits. Requires P700 is a chlorophyll a/chlorophyll a' dimer, A0 is one or more chlorophyll a, A1 is one or both phylloquinones and FX is a shared 4Fe-4S iron-sulfur center. as cofactor.

The protein resides in the plastid. Its subcellular location is the chloroplast thylakoid membrane. The enzyme catalyses reduced [plastocyanin] + hnu + oxidized [2Fe-2S]-[ferredoxin] = oxidized [plastocyanin] + reduced [2Fe-2S]-[ferredoxin]. In terms of biological role, psaA and PsaB bind P700, the primary electron donor of photosystem I (PSI), as well as the electron acceptors A0, A1 and FX. PSI is a plastocyanin-ferredoxin oxidoreductase, converting photonic excitation into a charge separation, which transfers an electron from the donor P700 chlorophyll pair to the spectroscopically characterized acceptors A0, A1, FX, FA and FB in turn. Oxidized P700 is reduced on the lumenal side of the thylakoid membrane by plastocyanin. This chain is Photosystem I P700 chlorophyll a apoprotein A2, found in Coffea arabica (Arabian coffee).